Consider the following 292-residue polypeptide: RWD domain-containing protein 2A (292 aa).

The 121-residue stretch at 14 to 134 folds into the RWD domain; the sequence is LEMEMLFSMF…QWLQDNSASY (121 aa).

This Macaca fascicularis (Crab-eating macaque) protein is RWD domain-containing protein 2A (RWDD2A).